Reading from the N-terminus, the 239-residue chain is Small ribosomal subunit protein uS2c (239 aa).

This sequence belongs to the universal ribosomal protein uS2 family.

It localises to the plastid. The chain is Small ribosomal subunit protein uS2c (rps2) from Aneura mirabilis (Parasitic liverwort).